The chain runs to 425 residues: Terminal nucleotidyltransferase 5B (425 aa).

A disordered region spans residues 1 to 42; that stretch reads MMPSESGAERRDRAAAQVGTAAATAVATAAPAGGGPDPEALS. Low complexity predominate over residues 15–31; it reads AAQVGTAAATAVATAAP.

Belongs to the TENT family.

It localises to the cytoplasm. Its subcellular location is the nucleus. It catalyses the reaction RNA(n) + ATP = RNA(n)-3'-adenine ribonucleotide + diphosphate. Its function is as follows. Catalyzes the transfer of one adenosine molecule from an ATP to an mRNA poly(A) tail bearing a 3'-OH terminal group in an ATP hydrolysis-dependent manner. May be involved in maintaining the translation efficiency of at least some genes through preventing degradation of their mRNAs. Prefers RNA molecules that are adenosine-rich close to 3'-end. In addition, may inhibit cell proliferation and cell cycle progression through ubiquitination of beta-catenin/CTNNB1. The sequence is that of Terminal nucleotidyltransferase 5B from Homo sapiens (Human).